A 705-amino-acid polypeptide reads, in one-letter code: Fatty acid oxidation complex subunit alpha (705 aa).

The enoyl-CoA hydratase stretch occupies residues 1-188; the sequence is MGKTFNLTRR…KMGLVNDVVP (188 aa). Residues 308–705 are 3-hydroxyacyl-CoA dehydrogenase; that stretch reads RKVKKAVILG…AMAAEKARFF (398 aa).

In the N-terminal section; belongs to the enoyl-CoA hydratase/isomerase family. The protein in the central section; belongs to the 3-hydroxyacyl-CoA dehydrogenase family. As to quaternary structure, heterotetramer of two alpha chains (FadJ) and two beta chains (FadI).

Its subcellular location is the cytoplasm. The catalysed reaction is a (3S)-3-hydroxyacyl-CoA = a (2E)-enoyl-CoA + H2O. It carries out the reaction a 4-saturated-(3S)-3-hydroxyacyl-CoA = a (3E)-enoyl-CoA + H2O. It catalyses the reaction a (3S)-3-hydroxyacyl-CoA + NAD(+) = a 3-oxoacyl-CoA + NADH + H(+). The enzyme catalyses (3S)-3-hydroxybutanoyl-CoA = (3R)-3-hydroxybutanoyl-CoA. Its pathway is lipid metabolism; fatty acid beta-oxidation. Functionally, catalyzes the formation of a hydroxyacyl-CoA by addition of water on enoyl-CoA. Also exhibits 3-hydroxyacyl-CoA epimerase and 3-hydroxyacyl-CoA dehydrogenase activities. The protein is Fatty acid oxidation complex subunit alpha of Shewanella oneidensis (strain ATCC 700550 / JCM 31522 / CIP 106686 / LMG 19005 / NCIMB 14063 / MR-1).